A 250-amino-acid chain; its full sequence is PF03932 family protein CutC (250 aa).

This sequence belongs to the CutC family.

The protein localises to the cytoplasm. This is PF03932 family protein CutC from Proteus mirabilis (strain HI4320).